Consider the following 513-residue polypeptide: Sugar transport protein 7 (513 aa).

Over 1–26 (MAGGSFGPTGVAKERAEQYQGKVTSY) the chain is Cytoplasmic. The next 12 membrane-spanning stretches (helical) occupy residues 27 to 47 (VIIA…DIGI), 84 to 104 (GLAA…LVAS), 121 to 141 (ISFL…MLLA), 144 to 164 (IMLG…LSEV), 171 to 191 (GGLN…ANMV), 205 to 225 (LSLG…YFLP), 286 to 306 (LVMA…SILF), 324 to 344 (YSSA…IGLV), 351 to 371 (ALLI…AVIL), 387 to 407 (VIVV…WGPL), 427 to 447 (ITVA…LGLL), and 452 to 472 (FGIF…VYFL). Residues 473–513 (LPETKGVPIEEMTLLWSKHWFWKKVLPDATNLEDESKNVSV) are Cytoplasmic-facing.

This sequence belongs to the major facilitator superfamily. Sugar transporter (TC 2.A.1.1) family.

It is found in the cell membrane. Its function is as follows. Mediates an active uptake of hexoses, probably by sugar/hydrogen symport. The protein is Sugar transport protein 7 (STP7) of Arabidopsis thaliana (Mouse-ear cress).